Consider the following 157-residue polypeptide: Thioredoxin 2 (157 aa).

An N-terminal signal peptide occupies residues 1–22 (MKHILALVVFIISFFCFKDVNC). A Thioredoxin domain is found at 46 to 157 (LRMYNKMPRL…ELTSTIRKHL (112 aa)). Residues cysteine 82 and cysteine 85 each act as nucleophile in the active site. An intrachain disulfide couples cysteine 82 to cysteine 85.

It belongs to the thioredoxin family. Monomer. Component of the translocon PTEX complex composed of HSP101, EXP2, PTEX150, PTEX88 and TRX2. Post-translationally, the disulfide bond between Cys-82 and Cys-85 acts as a redox-active center and is reduced by thioredoxin reductase TRXR.

Its function is as follows. Participates in various redox reactions through the reversible oxidation of its active center dithiol to a disulfide and catalyzes dithiol-disulfide exchange reactions. As part of the translocon PTEX complex, plays a role in the export of parasite proteins into the host erythrocyte. The translocon PTEX complex is a multi-protein machinery resident in the parasite parasitophorous vacuolar membrane, responsible for protein secretion into host cells. May contribute to the unfolding of proteins containing the PEXEL localization motif before their passage through the translocon or regulate the PTEX complex function. The chain is Thioredoxin 2 from Plasmodium berghei (strain Anka).